Here is a 122-residue protein sequence, read N- to C-terminus: Serum amyloid A-2 protein (122 aa).

The signal sequence occupies residues 1–19 (MKLLTSLVFCSLLLGVCHG). Basic and acidic residues predominate over residues 89 to 108 (RGHEDTMADQEANRHGRSGK). A disordered region spans residues 89–122 (RGHEDTMADQEANRHGRSGKDPNYYRPPGLPAKY).

The protein belongs to the SAA family. Apolipoprotein of the HDL complex. As to expression, expressed by the liver; secreted in plasma.

It localises to the secreted. Functionally, major acute phase reactant. This chain is Serum amyloid A-2 protein, found in Mus musculus (Mouse).